The chain runs to 104 residues: Guanidinium exporter (104 aa).

Position 1 (M1) is a topological domain, cytoplasmic. Residues 2 to 19 (AWIILVIAGLLEVIWAIG) form a helical membrane-spanning segment. Residues 20 to 28 (LKYSHGFSR) are Periplasmic-facing. Residues 29–48 (LTPSIITLVAMAASVFLLAY) traverse the membrane as a helical segment. The Cytoplasmic portion of the chain corresponds to 49-54 (AMKSLP). Residues 55–77 (AGTAYAVWTGIGAVGTAILGIVL) form a helical membrane-spanning segment. At 78 to 81 (LGES) the chain is on the periplasmic side. The chain crosses the membrane as a helical span at residues 82–100 (ASLARILSLGLILAGIIGL). Residues 101-104 (KLAS) lie on the Cytoplasmic side of the membrane.

Belongs to the drug/metabolite transporter (DMT) superfamily. Small multidrug resistance (SMR) (TC 2.A.7.1) family. Gdx/SugE subfamily.

It localises to the cell inner membrane. In terms of biological role, guanidinium ion exporter. Couples guanidinium export to the proton motive force, exchanging one guanidinium ion for two protons. The protein is Guanidinium exporter of Yersinia pestis.